Consider the following 1152-residue polypeptide: MALRVLLLTALTLCHGFNLDTENAMTFQENARGFGQSVVQLQGSRVVVGAPQEIVAANQRGSLYQCDYSTGSCEPIRLQVPVEAVNMSLGLSLAATTSPPQLLACGPTVHQTCSENTYVKGLCFLFGSNLRQQPQKFPEALRGCPQEDSDIAFLIDGSGSIIPHDFRRMKEFVSTVMEQLKKSKTLFSLMQYSEEFRIHFTFKEFQNNPNPRSLVKPITQLLGRTHTATGIRKVVRELFNITNGARKNAFKILVVITDGEKFGDPLGYEDVIPEADREGVIRYVIGVGDAFRSEKSRQELNTIASKPPRDHVFQVNNFEALKTIQNQLREKIFAIEGTQTGSSSSFEHEMSQEGFSAAITSNGPLLSTVGSYDWAGGVFLYTSKEKSTFINMTRVDSDMNDAYLGYAAAIILRNRVQSLVLGAPRYQHIGLVAMFRQNTGMWESNANVKGTQIGAYFGASLCSVDVDSNGSTDLVLIGAPHYYEQTRGGQVSVCPLPRGRARWQCDAVLYGEQGQPWGRFGAALTVLGDVNGDKLTDVAIGAPGEEDNRGAVYLFHGTSGSGISPSHSQRIAGSKLSPRLQYFGQSLSGGQDLTMDGLVDLTVGAQGHVLLLRSQPVLRVKAIMEFNPREVARNVFECNDQVVKGKEAGEVRVCLHVQKSTRDRLREGQIQSVVTYDLALDSGRPHSRAVFNETKNSTRRQTQVLGLTQTCETLKLQLPNCIEDPVSPIVLRLNFSLVGTPLSAFGNLRPVLAEDAQRLFTALFPFEKNCGNDNICQDDLSITFSFMSLDCLVVGGPREFNVTVTVRNDGEDSYRTQVTFFFPLDLSYRKVSTLQNQRSQRSWRLACESASSTEVSGALKSTSCSINHPIFPENSEVTFNITFDVDSKASLGNKLLLKANVTSENNMPRTNKTEFQLELPVKYAVYMVVTSHGVSTKYLNFTASENTSRVMQHQYQVSNLGQRSLPISLVFLVPVRLNQTVIWDRPQVTFSENLSSTCHTKERLPSHSDFLAELRKAPVVNCSIAVCQRIQCDIPFFGIQEEFNATLKGNLSFDWYIKTSHNHLLIVSTAEILFNDSVFTLLPGQGAFVRSQTETKVEPFEVPNPLPLIVGSSVGGLLLLALITAALYKLGFFKRQYKDMMSEGGPPGAEPQ.

The first 16 residues, 1–16, serve as a signal peptide directing secretion; it reads MALRVLLLTALTLCHG. Residues 17–1104 lie on the Extracellular side of the membrane; sequence FNLDTENAMT…TKVEPFEVPN (1088 aa). FG-GAP repeat units follow at residues 18–75 and 76–135; these read NLDT…SCEP and IRLQ…QQPQ. C66 and C73 form a disulfide bridge. N86 is a glycosylation site (N-linked (GlcNAc...) asparagine). Cysteines 105 and 123 form a disulfide. The 179-residue stretch at 150-328 folds into the VWFA domain; that stretch reads DIAFLIDGSG…EALKTIQNQL (179 aa). N-linked (GlcNAc...) asparagine glycosylation is present at N240. FG-GAP repeat units lie at residues 339–390, 391–442, 443–503, 506–564, and 569–629; these read QTGS…STFI, NMTR…TGMW, ESNA…RARW, DAVL…SGIS, and QRIA…FNPR. A glycan (N-linked (GlcNAc...) asparagine) is linked at N391. Ca(2+) is bound by residues D465, D467, N469, D473, D529, N531, D533, D537, D592, D596, and D600. Residue N469 is glycosylated (N-linked (GlcNAc...) asparagine). C654 and C711 are oxidised to a cystine. N-linked (GlcNAc...) asparagine glycans are attached at residues N692, N696, and N734. C770 and C776 are oxidised to a cystine. An N-linked (GlcNAc...) asparagine glycan is attached at N801. A disulfide bridge links C847 with C864. N-linked (GlcNAc...) asparagine glycosylation is found at N880, N900, N911, N940, N946, N978, N993, and N1021. 2 disulfides stabilise this stretch: C998/C1022 and C1027/C1032. Residues N1044, N1050, and N1075 are each glycosylated (N-linked (GlcNAc...) asparagine). A helical transmembrane segment spans residues 1105-1128; it reads PLPLIVGSSVGGLLLLALITAALY. Topologically, residues 1129-1152 are cytoplasmic; sequence KLGFFKRQYKDMMSEGGPPGAEPQ. Residues 1131 to 1135 carry the GFFKR motif motif; it reads GFFKR.

This sequence belongs to the integrin alpha chain family. Heterodimer of an alpha and a beta subunit. ITGAM associates with ITGB2. Found in a complex with CD177 and ITGB2/CD18. Interacts with JAM3. Interacts with THBD. Interacts with complement factor H/CFH; this interaction mediates adhesion of neutrophils to pathogens leading to pathogen clearance. Interacts with TMEM268; this interaction inhibits ITGAM degradation via the endosome-lysosome pathway. As to expression, predominantly expressed in monocytes and granulocytes. Expressed in neutrophils (at protein level).

The protein resides in the cell membrane. Its subcellular location is the membrane raft. Functionally, integrin ITGAM/ITGB2 is implicated in various adhesive interactions of monocytes, macrophages and granulocytes as well as in mediating the uptake of complement-coated particles and pathogens. It is identical with CR-3, the receptor for the iC3b fragment of the third complement component. It probably recognizes the R-G-D peptide in C3b. Integrin ITGAM/ITGB2 is also a receptor for fibrinogen, factor X and ICAM1. It recognizes P1 and P2 peptides of fibrinogen gamma chain. Regulates neutrophil migration. In association with beta subunit ITGB2/CD18, required for CD177-PRTN3-mediated activation of TNF primed neutrophils. May regulate phagocytosis-induced apoptosis in extravasated neutrophils. May play a role in mast cell development. Required with TYROBP/DAP12 in microglia to control production of microglial superoxide ions which promote the neuronal apoptosis that occurs during brain development. This Homo sapiens (Human) protein is Integrin alpha-M (ITGAM).